Reading from the N-terminus, the 159-residue chain is SsrA-binding protein (159 aa).

This sequence belongs to the SmpB family.

The protein localises to the cytoplasm. Required for rescue of stalled ribosomes mediated by trans-translation. Binds to transfer-messenger RNA (tmRNA), required for stable association of tmRNA with ribosomes. tmRNA and SmpB together mimic tRNA shape, replacing the anticodon stem-loop with SmpB. tmRNA is encoded by the ssrA gene; the 2 termini fold to resemble tRNA(Ala) and it encodes a 'tag peptide', a short internal open reading frame. During trans-translation Ala-aminoacylated tmRNA acts like a tRNA, entering the A-site of stalled ribosomes, displacing the stalled mRNA. The ribosome then switches to translate the ORF on the tmRNA; the nascent peptide is terminated with the 'tag peptide' encoded by the tmRNA and targeted for degradation. The ribosome is freed to recommence translation, which seems to be the essential function of trans-translation. The chain is SsrA-binding protein from Actinobacillus pleuropneumoniae serotype 5b (strain L20).